Reading from the N-terminus, the 207-residue chain is Ribonuclease HII (207 aa).

The RNase H type-2 domain occupies 20–207 (QLFAGVDEVG…KPVKRVLGIE (188 aa)). Residues Asp26, Glu27, and Asp118 each coordinate a divalent metal cation.

The protein belongs to the RNase HII family. The cofactor is Mn(2+). Mg(2+) serves as cofactor.

It is found in the cytoplasm. The enzyme catalyses Endonucleolytic cleavage to 5'-phosphomonoester.. In terms of biological role, endonuclease that specifically degrades the RNA of RNA-DNA hybrids. The protein is Ribonuclease HII of Aliivibrio salmonicida (strain LFI1238) (Vibrio salmonicida (strain LFI1238)).